Consider the following 348-residue polypeptide: Protein RecA (348 aa).

G65–T72 is an ATP binding site. A compositionally biased stretch (basic and acidic residues) spans L326–T336. The tract at residues L326 to F348 is disordered. The segment covering A338–F348 has biased composition (acidic residues).

The protein belongs to the RecA family.

Its subcellular location is the cytoplasm. In terms of biological role, can catalyze the hydrolysis of ATP in the presence of single-stranded DNA, the ATP-dependent uptake of single-stranded DNA by duplex DNA, and the ATP-dependent hybridization of homologous single-stranded DNAs. It interacts with LexA causing its activation and leading to its autocatalytic cleavage. This chain is Protein RecA, found in Aliivibrio fischeri (strain ATCC 700601 / ES114) (Vibrio fischeri).